The sequence spans 564 residues: Threonine--tRNA ligase (564 aa).

Positions 167 to 464 (DHRAIGKRLE…LLEKTHGNLP (298 aa)) are catalytic. Zn(2+) is bound by residues C260, H311, and H441.

Belongs to the class-II aminoacyl-tRNA synthetase family. As to quaternary structure, homodimer. Zn(2+) is required as a cofactor.

It is found in the cytoplasm. It catalyses the reaction tRNA(Thr) + L-threonine + ATP = L-threonyl-tRNA(Thr) + AMP + diphosphate + H(+). Catalyzes the attachment of threonine to tRNA(Thr) in a two-step reaction: L-threonine is first activated by ATP to form Thr-AMP and then transferred to the acceptor end of tRNA(Thr). Also edits incorrectly charged L-seryl-tRNA(Thr). In Mycoplasma pneumoniae (strain ATCC 29342 / M129 / Subtype 1) (Mycoplasmoides pneumoniae), this protein is Threonine--tRNA ligase.